The chain runs to 181 residues: ADP-ribosylation factor 1 (181 aa).

N-acetylglycine; alternate is present on Gly2. Gly2 carries the N-myristoyl glycine; alternate lipid modification. The segment at 3 to 16 is important for the stable binding to the membranes; sequence NIFANLFKGLFGKK. GTP-binding positions include 24–32, 126–129, and Ala160; these read GLDAAGKTT and NKQD.

Belongs to the small GTPase superfamily. Arf family. As to quaternary structure, interacts (when activated) with GGA1, GGA2 and GGA3; the interaction is required for proper subcellular location of GGA1, GGA2 and GGA3. Interacts with ARHGAP21, ASAP2, GGA1, HERC1, PRKCABP, PIP5K1B, TMED2, PSCD2, TMED10 and GRIA2. Interacts with ARFGAP1, which hydrolyzes GTP and thus, regulates its function. Interacts with PI4KB in the Golgi complex. Interacts with NCS1/FREQ in the Golgi and at the plasma membrane. Interacts with PLEKHA3. Interacts with PLEKHA8; the interaction, together with phosphatidylinositol 4-phosphate binding, is required for FAPP2-mediated glucosylceramide transfer activity. Interacts (activated) with PICK1 (via PDZ domain); the interaction blocks Arp2/3 complex inhibition. Interacts with IQSEC1. Interacts with C9orf72.

It is found in the golgi apparatus membrane. It localises to the synapse. The protein resides in the synaptosome. The protein localises to the postsynaptic density. The enzyme catalyses GTP + H2O = GDP + phosphate + H(+). Alternates between an inactive GDP-bound form and an active GTP-bound form. Activated by guanine nucleotide-exchange factors (GEFs) and inactivated by GTPase-activating proteins (GAPs). In terms of biological role, small GTPase involved in protein trafficking between different compartments. Modulates vesicle budding and uncoating within the Golgi complex. In its GTP-bound form, triggers the recruitment of coatomer proteins to the Golgi membrane. The hydrolysis of ARF1-bound GTP, which is mediated by ARFGAPs proteins, is required for dissociation of coat proteins from Golgi membranes and vesicles. The GTP-bound form interacts with PICK1 to limit PICK1-mediated inhibition of Arp2/3 complex activity; the function is linked to AMPA receptor (AMPAR) trafficking, regulation of synaptic plasticity of excitatory synapses and spine shrinkage during long-term depression (LTD). Plays a key role in the regulation of intestinal stem cells and gut microbiota, and is essential for maintaining intestinal homeostasis. Also plays a critical role in mast cell expansion but not in mast cell maturation by facilitating optimal mTORC1 activation. The chain is ADP-ribosylation factor 1 (ARF1) from Bos taurus (Bovine).